Reading from the N-terminus, the 307-residue chain is Ornithine carbamoyltransferase (307 aa).

Carbamoyl phosphate is bound by residues 53-56, glutamine 80, arginine 104, and 131-134; these read STRT and HPCQ. L-ornithine-binding positions include asparagine 162, aspartate 219, and 223–224; that span reads SM. Carbamoyl phosphate-binding positions include 259 to 260 and arginine 287; that span reads CL.

The protein belongs to the aspartate/ornithine carbamoyltransferase superfamily. OTCase family.

The protein localises to the cytoplasm. It carries out the reaction carbamoyl phosphate + L-ornithine = L-citrulline + phosphate + H(+). The protein operates within amino-acid biosynthesis; L-arginine biosynthesis; L-arginine from L-ornithine and carbamoyl phosphate: step 1/3. In terms of biological role, reversibly catalyzes the transfer of the carbamoyl group from carbamoyl phosphate (CP) to the N(epsilon) atom of ornithine (ORN) to produce L-citrulline. This is Ornithine carbamoyltransferase from Psychrobacter arcticus (strain DSM 17307 / VKM B-2377 / 273-4).